Consider the following 98-residue polypeptide: uncharacterized protein (98 aa).

Residues 77-98 form a disordered region; that stretch reads SERAGEEVPPLAVAGSDDGHDH.

This sequence to M.tuberculosis Rv1991c and Rv3269.

This is an uncharacterized protein from Mycobacterium bovis (strain ATCC BAA-935 / AF2122/97).